We begin with the raw amino-acid sequence, 367 residues long: Peptide chain release factor 2 (367 aa).

At Q254 the chain carries N5-methylglutamine.

This sequence belongs to the prokaryotic/mitochondrial release factor family. Methylated by PrmC. Methylation increases the termination efficiency of RF2.

The protein resides in the cytoplasm. Functionally, peptide chain release factor 2 directs the termination of translation in response to the peptide chain termination codons UGA and UAA. The protein is Peptide chain release factor 2 of Acidovorax ebreus (strain TPSY) (Diaphorobacter sp. (strain TPSY)).